A 134-amino-acid chain; its full sequence is Ribonuclease VapC (134 aa).

Residues 4-124 (IVDTSIIIAL…NTKDFKRIPE (121 aa)) enclose the PINc domain. Asp6 serves as a coordination point for Mg(2+).

The protein belongs to the PINc/VapC protein family. Mg(2+) is required as a cofactor.

Toxic component of a type II toxin-antitoxin (TA) system. Has ssRNase activity. Its RNase activity is partially neutralized by cognate antitoxin VapB. Rapidly induces apoptosis upon microinjection into mouse fibroblasts (L929 line). Probably contributes to host cell death if bacterial cell lysis occurs during host infection. The chain is Ribonuclease VapC from Rickettsia bellii (strain RML369-C).